The chain runs to 270 residues: MAPKVFYISDGTAITAEVFGHAVLSQFPLEFESLTIPFVETLAKAEQVKRQINDCFITTGERPLVFHSIVKAEIRDIIYSSEGVDYDFLNTFVAPLEQHLGVSASPVVHRTHGKANHGYEARIDAINFAMDNDDGQTMKHMDQADLILLGVSRCGKTPSSLYLSMQFGIKAANYPFTEDDMDNLKLPEALKRNKKKLFGLTIDPVRLHEIRQSRMENSRYSSLKQCRLEVKEVEMMFKRERIPYIDTTNHSVEEIATKILDVTGLERHMF.

150–157 (GVSRCGKT) serves as a coordination point for ADP.

The protein belongs to the pyruvate, phosphate/water dikinase regulatory protein family. PSRP subfamily.

The catalysed reaction is [pyruvate, water dikinase] + ADP = [pyruvate, water dikinase]-phosphate + AMP + H(+). It catalyses the reaction [pyruvate, water dikinase]-phosphate + phosphate + H(+) = [pyruvate, water dikinase] + diphosphate. In terms of biological role, bifunctional serine/threonine kinase and phosphorylase involved in the regulation of the phosphoenolpyruvate synthase (PEPS) by catalyzing its phosphorylation/dephosphorylation. This is Putative phosphoenolpyruvate synthase regulatory protein from Shewanella putrefaciens (strain CN-32 / ATCC BAA-453).